The following is a 670-amino-acid chain: MTKFQEMVTFKDVAVVFTREELGLLDLAQRKLYQDVMLENFRNLLSVGYQPFKLDVILQLGKEDKLRMMETEIQGDGCSGHKNQNEIDTLQEVRLRFLSYEDLICWQIWEQFTSKLTSNQDLIINLQGKRSKLLKQGDSPCQVWTGESSQVSEDENYVIKLQGESSNSIKNQELPLRTTWDFWRKMYLREPQNYQSRCQQIDVKNKLCKCDHCVRQRIAHQHDDHGVHKREKAFSHNNCGKDCVKESSQHSIIQSGEQTSDENGKGLSVGSNLELHQQLHLRDKPHVNVEYGKGIGYSSGLPRHQCFHIGEKCYRNGDSGEGFSQGSHLQPHQRVSTGENLYRCQVYARSSNQNSCLPSHELTHPGEKLCTCGRCGKGFHHSLDFDIHCVDSAGERACKCDVYDKGFSQTSQLQAHQRGHSRDKTYKWEVSDRIFNRNSGLHQRVHTGEKPYKCEVCDKGFSKASNLQAHQRIHTGEKPYKCDVCDKNFSRNSHLQAHQRVHTGEKPYKCDTCGKDFSQISHLQAHQRVHKGEKPYKCETCGKGFSQSSHLQDHQQVHTGENPYKCDVCGKGFSWSSHLQAHQRVHTGEKPYKCEECRKGFIWNSYLHVHQRIHTGEKPYKCGMCGKSFSQTSHLQAHQRVHTGEKPYKCFVCGKGFSKSSLSSDSSESP.

The region spanning 8–79 is the KRAB domain; sequence VTFKDVAVVF…ETEIQGDGCS (72 aa). Residues 258–280 form a C2H2-type 1; degenerate zinc finger; sequence QTSDENGKGLSVGSNLELHQQLH. A C2H2-type 2; degenerate zinc finger spans residues 311 to 336; that stretch reads EKCYRNGDSGEGFSQGSHLQPHQRVS. The C2H2-type 3; degenerate zinc finger occupies 342-364; the sequence is YRCQVYARSSNQNSCLPSHELTH. A C2H2-type 4; degenerate zinc finger spans residues 370 to 392; that stretch reads CTCGRCGKGFHHSLDFDIHCVDS. A C2H2-type 5; degenerate zinc finger spans residues 398–420; the sequence is CKCDVYDKGFSQTSQLQAHQRGH. 7 consecutive C2H2-type zinc fingers follow at residues 452-474, 480-502, 508-530, 536-558, 564-586, 592-614, and 620-642; these read YKCE…QRIH, YKCD…QRVH, YKCE…QQVH, and YKCG…QRVH.

This sequence belongs to the krueppel C2H2-type zinc-finger protein family.

Its subcellular location is the nucleus. May be involved in transcriptional regulation. The chain is Zinc finger protein 233 (ZNF233) from Homo sapiens (Human).